Here is a 496-residue protein sequence, read N- to C-terminus: Lysine--tRNA ligase (496 aa).

Glutamate 407 and glutamate 414 together coordinate Mg(2+).

This sequence belongs to the class-II aminoacyl-tRNA synthetase family. In terms of assembly, homodimer. Requires Mg(2+) as cofactor.

Its subcellular location is the cytoplasm. The enzyme catalyses tRNA(Lys) + L-lysine + ATP = L-lysyl-tRNA(Lys) + AMP + diphosphate. The chain is Lysine--tRNA ligase from Staphylococcus haemolyticus (strain JCSC1435).